The chain runs to 1294 residues: Voltage-gated inwardly rectifying potassium channel KCNH2 (1294 aa).

At 1–377 (RKFIIANARV…RIHRWTILHY (377 aa)) the chain is on the cytoplasmic side. The 30-residue stretch at 15–44 (VIYCNDGFCELCGYSRAEVMQRPCTCDFLH) folds into the PAS domain. In terms of domain architecture, PAC spans 66–118 (RKVEIAFYRKDGSCFLCLVDVVPVKNEDGAVIMFILNFEVVMEKDMVGSPARD). Residues 207-258 (LVAPGSPPSSVPGPPHTSPRAHSLNPDASGSSCSLARTRSRESCASVRRASS) are disordered. The span at 211-223 (GSPPSSVPGPPHT) shows a compositional bias: pro residues. Phosphoserine is present on residues S212 and S216. The segment covering 232-243 (PDASGSSCSLAR) has biased composition (polar residues). S257, S258, S294, and S325 each carry phosphoserine. The chain crosses the membrane as a helical span at residues 378–398 (SPFKAVWDWLILLLVIYTAVF). At 399 to 424 (TPYSAAFLLKEPEEDAQTADCGYACQ) the chain is on the extracellular side. A helical membrane pass occupies residues 425-445 (PLAVVDLIVDIMFIVDILINF). Over 446–469 (RTTYVNANEEVVSHPGRIAVHYFK) the chain is Cytoplasmic. The chain crosses the membrane as a helical span at residues 470 to 490 (GWFLIDMVAAIPFDLLIFGSG). The Extracellular portion of the chain corresponds to 491 to 494 (SEEL). The helical; Voltage-sensor transmembrane segment at 495 to 515 (IGLLKTARLLRLVRVARKLDR) threads the bilayer. Over 516–521 (YSEYGA) the chain is Cytoplasmic. Residues 522-542 (AVLFLLMCTFALIAHWLACIW) traverse the membrane as a helical segment. Residues 543–585 (YAIGNMEQPDMNSRIGWLHNLGDQIGKPYNSSGLGGPSIKDKY) are Extracellular-facing. The pore-forming intramembrane region spans 586 to 606 (VTALYFTFSSLTSVGFGNVSP). A Selectivity filter motif is present at residues 598-603 (SVGFGN). The Extracellular portion of the chain corresponds to 607 to 612 (NTNSEK). A helical membrane pass occupies residues 613 to 633 (IFSICVMLIGSLMYASIFGNV). Residues 634–1294 (SAIIQRLYSG…IAHWLACIWY (661 aa)) lie on the Cytoplasmic side of the membrane. The tract at residues 716 to 816 (PFRGATKGCL…IHRDDLLEVL (101 aa)) is cNMP-binding domain. The interval 844–956 (GSPGSTELEG…LTEDGDKSDT (113 aa)) is disordered. 2 positions are modified to phosphoserine: S845 and S848. The segment covering 857-866 (RQRRRKLSFR) has biased composition (basic residues). Residues 902–913 (GDSPSSGPSSPE) are compositionally biased toward low complexity. Omega-N-methylarginine is present on R987. The stretch at 1008–1035 (RGDVESRLDALQRQLNRLETRLSADMAT) forms a coiled coil. A Phosphoserine modification is found at S1110.

The protein belongs to the potassium channel family. H (Eag) (TC 1.A.1.20) subfamily. Kv11.1/KCNH2 sub-subfamily. As to quaternary structure, the potassium channel is probably composed of a homo- or heterotetrameric complex of pore-forming alpha subunits that can associate with modulating beta subunits. Interacts with DNAJB12 and DNAJB14; chaperones DNAJB12 and DNAJB14 promote tetramerization. Heteromultimer with KCNH6/ERG2 and KCNH7/ERG3. Interacts with ALG10B. Forms a stable complex with KCNE1 or KCNE2, and that this heteromultimerization regulates Inward rectifier potassium channel activity. Interacts with CANX. The core-glycosylated, but not the fully glycosylated form interacts with RNF207. Interacts with NDFIP1 and NDFIP2; this interaction decreases the cell membrane expression by targeting KCNH2, through interaction with NEDD4L, for the degradation through the multivesicular bodies (MVBs)-lysosomal pathway. Phosphorylated on serine and threonine residues. Phosphorylation by PKA inhibits ion conduction. In terms of tissue distribution, highly expressed in heart and brain.

It is found in the cell membrane. It carries out the reaction K(+)(in) = K(+)(out). Functionally, pore-forming (alpha) subunit of voltage-gated inwardly rectifying potassium channel. Characterized by unusual gating kinetics by producing relatively small outward currents during membrane depolarization and large inward currents during subsequent repolarization which reflect a rapid inactivation during depolarization and quick recovery from inactivation but slow deactivation (closing) during repolarization. Channel properties are modulated by cAMP and subunit assembly. Forms a stable complex with KCNE1 or KCNE2, and that this heteromultimerization regulates inward rectifier potassium channel activity. This is Voltage-gated inwardly rectifying potassium channel KCNH2 from Cavia porcellus (Guinea pig).